Here is a 405-residue protein sequence, read N- to C-terminus: Succinyl-CoA--L-malate CoA-transferase beta subunit (405 aa).

Residue Asp-175 is the Nucleophile of the active site.

It belongs to the CoA-transferase III family. As to quaternary structure, forms a large complex composed of six heterodimers (alpha, beta).

It catalyses the reaction succinyl-CoA + (S)-malate = (S)-malyl-CoA + succinate. It carries out the reaction (3S)-citramalate + succinyl-CoA = (3S)-citramalyl-CoA + succinate. Its function is as follows. Involved in the 3-hydroxypropionate cycle used for autotrophic carbon dioxide fixation. Catalyzes the transfer of CoA moiety from succinyl-CoA to L-malate to yield L-malyl-CoA. The protein is Succinyl-CoA--L-malate CoA-transferase beta subunit (smtB) of Chloroflexus aurantiacus (strain ATCC 29366 / DSM 635 / J-10-fl).